Reading from the N-terminus, the 318-residue chain is 1-phosphofructokinase (318 aa).

Residues 228 to 233 (SMGTEG) and 259 to 260 (GD) contribute to the ATP site. Aspartate 260 serves as the catalytic Proton acceptor.

The protein belongs to the carbohydrate kinase PfkB family.

The catalysed reaction is beta-D-fructose 1-phosphate + ATP = beta-D-fructose 1,6-bisphosphate + ADP + H(+). Catalyzes the ATP-dependent phosphorylation of fructose-l-phosphate to fructose-l,6-bisphosphate. This chain is 1-phosphofructokinase, found in Xanthomonas campestris pv. campestris (strain ATCC 33913 / DSM 3586 / NCPPB 528 / LMG 568 / P 25).